The chain runs to 325 residues: Glutarate 2-hydroxylase (325 aa).

Fe cation is bound by residues His-160, Asp-162, and His-292.

Belongs to the glutarate hydroxylase family. In terms of assembly, homotetramer. Requires Fe(2+) as cofactor.

The enzyme catalyses glutarate + 2-oxoglutarate + O2 = (S)-2-hydroxyglutarate + succinate + CO2. It participates in amino-acid degradation. In terms of biological role, acts as an alpha-ketoglutarate-dependent dioxygenase catalyzing hydroxylation of glutarate (GA) to L-2-hydroxyglutarate (L2HG). Functions in a L-lysine degradation pathway that proceeds via cadaverine, glutarate and L-2-hydroxyglutarate. The polypeptide is Glutarate 2-hydroxylase (Escherichia coli (strain K12 / MC4100 / BW2952)).